Here is a 208-residue protein sequence, read N- to C-terminus: MTHVVLIDNHDSFVYNLVDAFAVAGYKCTVFRNTVPVETILAANPDLICLSPGPGYPADAGNMMALIERTLGQIPLLGICLGYQALIEYHGGKVEPCGPVHGTTDNMILTDAGVQSPVFAGLATDVEPDHPEIPGRKVPIGRYHSLGCVVAPDGIESLGTCSSEIGDVIMAARTTDGKAIGLQFHPESVLSPTGPVILSRCVEQLLAN.

Residues histidine 3–asparagine 208 form the Glutamine amidotransferase type-1 domain. Glycine 53 to glycine 55 contacts L-glutamine. The active-site Nucleophile; for GATase activity is cysteine 80. L-glutamine contacts are provided by residues glutamine 84 and serine 145–leucine 146. Residues histidine 185 and glutamate 187 each act as for GATase activity in the active site.

Heterotetramer consisting of two non-identical subunits: a beta subunit (TrpG) and a large alpha subunit (TrpE).

It carries out the reaction chorismate + L-glutamine = anthranilate + pyruvate + L-glutamate + H(+). It functions in the pathway amino-acid biosynthesis; L-tryptophan biosynthesis; L-tryptophan from chorismate: step 1/5. Part of a heterotetrameric complex that catalyzes the two-step biosynthesis of anthranilate, an intermediate in the biosynthesis of L-tryptophan. In the first step, the glutamine-binding beta subunit (TrpG) of anthranilate synthase (AS) provides the glutamine amidotransferase activity which generates ammonia as a substrate that, along with chorismate, is used in the second step, catalyzed by the large alpha subunit of AS (TrpE) to produce anthranilate. In the absence of TrpG, TrpE can synthesize anthranilate directly from chorismate and high concentrations of ammonia. The sequence is that of Anthranilate synthase component 2 (trpG) from Corynebacterium glutamicum (strain ATCC 13032 / DSM 20300 / JCM 1318 / BCRC 11384 / CCUG 27702 / LMG 3730 / NBRC 12168 / NCIMB 10025 / NRRL B-2784 / 534).